The primary structure comprises 178 residues: Cytochrome b6-f complex iron-sulfur subunit (178 aa).

Residues 20–42 (LLTFGSVTGVALGALYPVVNYFI) form a helical membrane-spanning segment. Positions 65-161 (ATGWLSSHPE…VSVENDNVFV (97 aa)) constitute a Rieske domain. Cys107, His109, Cys125, and His128 together coordinate [2Fe-2S] cluster. The cysteines at positions 112 and 127 are disulfide-linked.

The protein belongs to the Rieske iron-sulfur protein family. As to quaternary structure, the 4 large subunits of the cytochrome b6-f complex are cytochrome b6, subunit IV (17 kDa polypeptide, PetD), cytochrome f and the Rieske protein, while the 4 small subunits are PetG, PetL, PetM and PetN. The complex functions as a dimer. Requires [2Fe-2S] cluster as cofactor.

The protein resides in the cellular thylakoid membrane. It catalyses the reaction 2 oxidized [plastocyanin] + a plastoquinol + 2 H(+)(in) = 2 reduced [plastocyanin] + a plastoquinone + 4 H(+)(out). Functionally, component of the cytochrome b6-f complex, which mediates electron transfer between photosystem II (PSII) and photosystem I (PSI), cyclic electron flow around PSI, and state transitions. The chain is Cytochrome b6-f complex iron-sulfur subunit from Parasynechococcus marenigrum (strain WH8102).